The sequence spans 358 residues: Acyl-CoA Delta-12 desaturase (358 aa).

The next 2 helical transmembrane spans lie at 30 to 50 (IILY…AMFY) and 55 to 75 (TVFY…AGSH). Fe cation-binding residues include His75, His80, His112, His115, and His116. Positions 75-80 (HRLWAH) match the Histidine box-1 motif. Residues 112–116 (HRVHH) carry the Histidine box-2 motif. 2 helical membrane passes run 175–195 (TFFA…YFWG) and 200–220 (TAFF…TFLV). Fe cation-binding residues include His225, His254, His257, and His258. The short motif at 254-258 (HNYHH) is the Histidine box-3 element.

Belongs to the fatty acid desaturase type 1 family. It depends on Fe(2+) as a cofactor.

It is found in the membrane. It catalyses the reaction (9Z)-octadecenoyl-CoA + 2 Fe(II)-[cytochrome b5] + O2 + 2 H(+) = (9Z,12Z)-octadecadienoyl-CoA + 2 Fe(III)-[cytochrome b5] + 2 H2O. The enzyme catalyses (9Z)-hexadecenoyl-CoA + 2 Fe(II)-[cytochrome b5] + O2 + 2 H(+) = (9Z,12Z)-hexadecadienoyl-CoA + 2 Fe(III)-[cytochrome b5] + 2 H2O. In terms of biological role, catalyzes the formation of a Delta12 double bond, acting on monounsaturated fatty acyl substrates like palmitoleoyl-CoA ((9Z)-hexadecenoyl-CoA) and oleoyl-CoA ((9Z)-octadecenoyl-CoA) with higher desaturation activity on (9Z)-octadecenoyl-CoA than (9Z)-hexadecenoyl-CoA. Requires preexisting cis double bond at the Delta9 position of fatty acyls to be able to insert the Delta12 double bond. Delta12-desaturation of (9Z)-octadecenoyl-CoA in insects produces (9Z,12Z)-octadecadienoyl-CoA (linoleoyl-CoA) which may be used to supply precursors of crucial mediators of immunity and reproduction and other essential functions. The chain is Acyl-CoA Delta-12 desaturase from Tribolium castaneum (Red flour beetle).